The primary structure comprises 369 residues: Putative transport protein YueF (369 aa).

Transmembrane regions (helical) follow at residues 13–33, 34–54, 73–93, 159–179, 213–233, 234–254, 271–291, and 316–336; these read ILFV…FQPF, IVFI…YFIF, LIYL…GPII, AVFG…FILF, DTLA…GTAC, FIGY…VMAI, VIVG…VVVI, and IILL…ILAV.

This sequence belongs to the autoinducer-2 exporter (AI-2E) (TC 2.A.86) family.

It is found in the cell membrane. The polypeptide is Putative transport protein YueF (yueF) (Bacillus subtilis (strain 168)).